Reading from the N-terminus, the 262-residue chain is MIDATAQIHPTAVVEEGAVIGANVKIGPFCYVDSKVEIGEGTELLSHVVVKGPTKIGKENRIFQFASIGEQCQDLKYAGEDTQLVIGDRNTIRESVTMHRGTVQDKGITIVGSDNLFMINAHVAHDCVIGDRCIFANNATLAGHVKVGNQAIVGGMSAIHQFCHIGDHCMLGGGSIVVQDVPPYVMAQGNHCAPFGINVEGLKRRGFEKKEILAIRRAYKTLYRSGLTLEAAKEEIAKETEAFPAVKLFLEFLEKSQRGIIR.

The protein belongs to the transferase hexapeptide repeat family. LpxA subfamily. In terms of assembly, homotrimer.

The protein resides in the cytoplasm. It catalyses the reaction a (3R)-hydroxyacyl-[ACP] + UDP-N-acetyl-alpha-D-glucosamine = a UDP-3-O-[(3R)-3-hydroxyacyl]-N-acetyl-alpha-D-glucosamine + holo-[ACP]. It functions in the pathway glycolipid biosynthesis; lipid IV(A) biosynthesis; lipid IV(A) from (3R)-3-hydroxytetradecanoyl-[acyl-carrier-protein] and UDP-N-acetyl-alpha-D-glucosamine: step 1/6. Functionally, involved in the biosynthesis of lipid A, a phosphorylated glycolipid that anchors the lipopolysaccharide to the outer membrane of the cell. The polypeptide is Acyl-[acyl-carrier-protein]--UDP-N-acetylglucosamine O-acyltransferase (Vibrio vulnificus (strain CMCP6)).